Here is a 509-residue protein sequence, read N- to C-terminus: Glycogen synthase 2 (509 aa).

Lys15 is an ADP-alpha-D-glucose binding site.

Belongs to the glycosyltransferase 1 family. Bacterial/plant glycogen synthase subfamily.

It catalyses the reaction [(1-&gt;4)-alpha-D-glucosyl](n) + ADP-alpha-D-glucose = [(1-&gt;4)-alpha-D-glucosyl](n+1) + ADP + H(+). The protein operates within glycan biosynthesis; glycogen biosynthesis. Synthesizes alpha-1,4-glucan chains using ADP-glucose. This chain is Glycogen synthase 2 (glgA2), found in Agrobacterium fabrum (strain C58 / ATCC 33970) (Agrobacterium tumefaciens (strain C58)).